A 115-amino-acid polypeptide reads, in one-letter code: U3-lycotoxin-Ls1k (115 aa).

Positions 1-20 (MKFVLLFGVLVVTLFSYSSA) are cleaved as a signal peptide. Positions 21-44 (EMLDDFDQADEDELLSLIEKEEAR) are excised as a propeptide. Disulfide bonds link Cys-48-Cys-63, Cys-55-Cys-72, Cys-62-Cys-87, and Cys-74-Cys-85.

It belongs to the neurotoxin 19 (CSTX) family. 01 subfamily. As to expression, expressed by the venom gland.

The protein localises to the secreted. The sequence is that of U3-lycotoxin-Ls1k from Lycosa singoriensis (Wolf spider).